The chain runs to 214 residues: Adenylate kinase (214 aa).

Residue 10–15 (GAGKGT) coordinates ATP. The tract at residues 30–59 (STGDMLRAAIKAGTELGKQAKAVIDAGQLV) is NMP. Residues Thr-31, Arg-36, 57 to 59 (QLV), 85 to 88 (GFPR), and Gln-92 each bind AMP. An LID region spans residues 122–159 (GRRAHLPSGRTYHVVYNPPKVEGKDDVTGEDLVVRDDD). Residues Arg-123 and 132–133 (TY) each bind ATP. Arg-156 and Arg-167 together coordinate AMP. Residue Lys-200 coordinates ATP.

The protein belongs to the adenylate kinase family. In terms of assembly, monomer.

It localises to the cytoplasm. It carries out the reaction AMP + ATP = 2 ADP. It participates in purine metabolism; AMP biosynthesis via salvage pathway; AMP from ADP: step 1/1. Its function is as follows. Catalyzes the reversible transfer of the terminal phosphate group between ATP and AMP. Plays an important role in cellular energy homeostasis and in adenine nucleotide metabolism. The polypeptide is Adenylate kinase (Vibrio vulnificus (strain YJ016)).